A 72-amino-acid chain; its full sequence is Translation initiation factor IF-1 (72 aa).

In terms of domain architecture, S1-like spans Met1 to Lys72.

The protein belongs to the IF-1 family. As to quaternary structure, component of the 30S ribosomal translation pre-initiation complex which assembles on the 30S ribosome in the order IF-2 and IF-3, IF-1 and N-formylmethionyl-tRNA(fMet); mRNA recruitment can occur at any time during PIC assembly.

The protein resides in the cytoplasm. Its function is as follows. One of the essential components for the initiation of protein synthesis. Stabilizes the binding of IF-2 and IF-3 on the 30S subunit to which N-formylmethionyl-tRNA(fMet) subsequently binds. Helps modulate mRNA selection, yielding the 30S pre-initiation complex (PIC). Upon addition of the 50S ribosomal subunit IF-1, IF-2 and IF-3 are released leaving the mature 70S translation initiation complex. This Ruegeria sp. (strain TM1040) (Silicibacter sp.) protein is Translation initiation factor IF-1.